A 193-amino-acid polypeptide reads, in one-letter code: Zinc finger CCHC domain-containing protein 17 (193 aa).

The S1 motif; truncated domain maps to 1-40; sequence MSSCRVDKPSEIVDVGDKVWVKLIGREMKNDRIKVSLSMK. S66 carries the post-translational modification Phosphoserine. The CCHC-type zinc-finger motif lies at 83–100; it reads TTCKKCGCKGHFAKDCFM. The residue at position 96 (K96) is an N6-acetyllysine. Residues 113 to 193 are disordered; the sequence is EEEEKEEAKS…KKKHKKKHKE (81 aa). Residues 118–129 show a composition bias toward basic and acidic residues; that stretch reads EEAKSAEFEKPV. Basic residues predominate over residues 134-150; the sequence is PSRKRKKEKKKKKHRDR. S135 carries the phosphoserine modification. Residues 163–177 show a composition bias toward basic and acidic residues; that stretch reads DTGKRARHTSKDSKA. Over residues 178 to 193 the composition is skewed to basic residues; it reads AKKKKKKKKHKKKHKE.

As to quaternary structure, may interact with PNN. May associate with the 60 S ribosomal subunit.

It localises to the nucleus. The protein localises to the nucleolus. The polypeptide is Zinc finger CCHC domain-containing protein 17 (ZCCHC17) (Macaca fascicularis (Crab-eating macaque)).